A 93-amino-acid chain; its full sequence is MICAVYKSRRKADSYLFVEKRNEFERVPEALLEMFGPPELVMMLPLMKRDHLGFADIEKVKSELADKGFYLQLPPPVVNLLEEHKREIGYSRD.

One can recognise a YcgL domain in the interval 1 to 85 (MICAVYKSRR…PVVNLLEEHK (85 aa)).

The sequence is that of YcgL domain-containing protein Swoo_2115 from Shewanella woodyi (strain ATCC 51908 / MS32).